The chain runs to 237 residues: Orotidine 5'-phosphate decarboxylase (237 aa).

Residues aspartate 17, lysine 39, 66-75, threonine 121, arginine 182, glutamine 191, glycine 211, and arginine 212 contribute to the substrate site; that span reads DLKLHDIGNT. Lysine 68 acts as the Proton donor in catalysis.

The protein belongs to the OMP decarboxylase family. Type 1 subfamily. Homodimer.

It carries out the reaction orotidine 5'-phosphate + H(+) = UMP + CO2. It participates in pyrimidine metabolism; UMP biosynthesis via de novo pathway; UMP from orotate: step 2/2. Its function is as follows. Catalyzes the decarboxylation of orotidine 5'-monophosphate (OMP) to uridine 5'-monophosphate (UMP). The polypeptide is Orotidine 5'-phosphate decarboxylase (Rhodopseudomonas palustris (strain ATCC BAA-98 / CGA009)).